The primary structure comprises 721 residues: Fatty acid oxidation complex subunit alpha (721 aa).

An enoyl-CoA hydratase/isomerase region spans residues M1 to A190. Substrate is bound at residue D297. The 3-hydroxyacyl-CoA dehydrogenase stretch occupies residues K312–E721. NAD(+) contacts are provided by residues M325, D344, V401 to E403, K408, and S430. The active-site For 3-hydroxyacyl-CoA dehydrogenase activity is the H451. Residue N454 coordinates NAD(+). Residues N501 and Y660 each contribute to the substrate site.

The protein in the N-terminal section; belongs to the enoyl-CoA hydratase/isomerase family. This sequence in the C-terminal section; belongs to the 3-hydroxyacyl-CoA dehydrogenase family. Heterotetramer of two alpha chains (FadB) and two beta chains (FadA).

The catalysed reaction is a (3S)-3-hydroxyacyl-CoA + NAD(+) = a 3-oxoacyl-CoA + NADH + H(+). The enzyme catalyses a (3S)-3-hydroxyacyl-CoA = a (2E)-enoyl-CoA + H2O. It catalyses the reaction a 4-saturated-(3S)-3-hydroxyacyl-CoA = a (3E)-enoyl-CoA + H2O. It carries out the reaction (3S)-3-hydroxybutanoyl-CoA = (3R)-3-hydroxybutanoyl-CoA. The catalysed reaction is a (3Z)-enoyl-CoA = a 4-saturated (2E)-enoyl-CoA. The enzyme catalyses a (3E)-enoyl-CoA = a 4-saturated (2E)-enoyl-CoA. Its pathway is lipid metabolism; fatty acid beta-oxidation. In terms of biological role, involved in the aerobic and anaerobic degradation of long-chain fatty acids via beta-oxidation cycle. Catalyzes the formation of 3-oxoacyl-CoA from enoyl-CoA via L-3-hydroxyacyl-CoA. It can also use D-3-hydroxyacyl-CoA and cis-3-enoyl-CoA as substrate. This is Fatty acid oxidation complex subunit alpha from Pseudomonas syringae pv. syringae (strain B728a).